A 238-amino-acid chain; its full sequence is LexA repressor (238 aa).

The segment at residues 26–46 (FDEMKDALDLASKSGIHRLIT) is a DNA-binding region (H-T-H motif). Residues serine 158 and lysine 196 each act as for autocatalytic cleavage activity in the active site.

It belongs to the peptidase S24 family. In terms of assembly, homodimer.

The catalysed reaction is Hydrolysis of Ala-|-Gly bond in repressor LexA.. Functionally, represses a number of genes involved in the response to DNA damage (SOS response), including recA and lexA. In the presence of single-stranded DNA, RecA interacts with LexA causing an autocatalytic cleavage which disrupts the DNA-binding part of LexA, leading to derepression of the SOS regulon and eventually DNA repair. This Sinorhizobium medicae (strain WSM419) (Ensifer medicae) protein is LexA repressor.